A 246-amino-acid polypeptide reads, in one-letter code: Sec-independent protein translocase protein TatB (246 aa).

Residues 1–21 form a helical membrane-spanning segment; the sequence is MFDIGWSELLVIAVVLIVVVG. Disordered stretches follow at residues 94-122, 179-204, and 225-246; these read SDLQ…APLV, SRSK…PKPT, and VADA…KDEA. 2 stretches are compositionally biased toward polar residues: residues 97–112 and 187–197; these read QKAT…TAAP and PETTVATNASE.

This sequence belongs to the TatB family. In terms of assembly, the Tat system comprises two distinct complexes: a TatABC complex, containing multiple copies of TatA, TatB and TatC subunits, and a separate TatA complex, containing only TatA subunits. Substrates initially bind to the TatABC complex, which probably triggers association of the separate TatA complex to form the active translocon.

It localises to the cell inner membrane. Functionally, part of the twin-arginine translocation (Tat) system that transports large folded proteins containing a characteristic twin-arginine motif in their signal peptide across membranes. Together with TatC, TatB is part of a receptor directly interacting with Tat signal peptides. TatB may form an oligomeric binding site that transiently accommodates folded Tat precursor proteins before their translocation. The chain is Sec-independent protein translocase protein TatB from Agrobacterium fabrum (strain C58 / ATCC 33970) (Agrobacterium tumefaciens (strain C58)).